The primary structure comprises 242 residues: Ubiquitin-conjugating enzyme E2 6 (242 aa).

The Cytoplasmic portion of the chain corresponds to 1 to 220 (MASRQSQKRL…HSTPSFGVQR (220 aa)). In terms of domain architecture, UBC core spans 5-156 (QSQKRLTKEY…NQRFTKQFPD (152 aa)). Residue Cys87 is the Glycyl thioester intermediate of the active site. Residues 170 to 190 (AREQAAATTDSTDPEKPFDVR) form a disordered region. The chain crosses the membrane as a helical span at residues 221-240 (FTLVGVVVAAFIAAYFNFFS).

Belongs to the ubiquitin-conjugating enzyme family.

It localises to the endoplasmic reticulum membrane. It carries out the reaction S-ubiquitinyl-[E1 ubiquitin-activating enzyme]-L-cysteine + [E2 ubiquitin-conjugating enzyme]-L-cysteine = [E1 ubiquitin-activating enzyme]-L-cysteine + S-ubiquitinyl-[E2 ubiquitin-conjugating enzyme]-L-cysteine.. It participates in protein modification; protein ubiquitination. Functionally, catalyzes the covalent attachment of ubiquitin to other proteins. Functions in degradation of misfolded or regulated proteins localized in the endoplasmic reticulum (ER) lumen or membrane via the ubiquitin-proteasome system. Cognate E2 conjugating enzyme for the DOA10 ubiquitin ligase complex, which is part of the ERAD-C pathway responsible for the rapid degradation of membrane proteins with misfolded cytoplasmic domains. The polypeptide is Ubiquitin-conjugating enzyme E2 6 (UBC6) (Debaryomyces hansenii (strain ATCC 36239 / CBS 767 / BCRC 21394 / JCM 1990 / NBRC 0083 / IGC 2968) (Yeast)).